We begin with the raw amino-acid sequence, 635 residues long: Cerevisin (635 aa).

The N-terminal stretch at 1-19 (MKLENTLFTLGALGSISAA) is a signal peptide. The propeptide occupies 20–280 (LVIPNLENAA…VERDSIVEAT (261 aa)). Composition is skewed to basic and acidic residues over residues 35–50 (INKEDHHERPRKVEFT), 74–85 (KGQDKESPEFNG), 94–109 (SAHEGGKGMKPKHESS), and 126–136 (GCHENKVEEKK). Residues 35–155 (INKEDHHERP…KHHEKTLEKG (121 aa)) form a disordered region. Basic residues predominate over residues 137–155 (MKGKKVKGKKHHEKTLEKG). The Inhibitor I9 domain occupies 182–278 (RYIIVFKRGA…DFVERDSIVE (97 aa)). Positions 289–614 (PWGLARISHR…KQELNMDEFI (326 aa)) constitute a Peptidase S8 domain. Catalysis depends on charge relay system residues aspartate 325 and histidine 357. Cysteine 460 and cysteine 491 form a disulfide bridge. Serine 519 (charge relay system) is an active-site residue. The propeptide occupies 575-635 (DTPNVLIYNG…RDILDKLNII (61 aa)). Asparagine 594 carries an N-linked (GlcNAc...) asparagine glycan.

This sequence belongs to the peptidase S8 family. Post-translationally, activated by N- and C-terminal proteolytic cleavage. Protease B (PrB/PRB1) processing requires at least 4 cleavages. First, the signal peptide is removed from the 76 kDa preproprotease B by signal peptidase in the ER. Then, PrB removes its own Pro-region (in trans) at the N-terminus, producing a 39 kDa form before exiting the ER. In the Golgi complex, the C-terminal Post-region of the 40 kDa proprotease B undergoes protease A (PrA/PEP4)-mediated processing to a 37 kDa intermediate, which in turn is quickly processed again by PrB in trans to yield the 31 kDa mature PrB. Glycosylated. Preproprotease B is a 76 kDa unglycosylated precursor that enters the endoplasmic reticulum (ER), where it receives one Asn-linked and an undetermined number of non-Asn-linked carbohydrate side chains. In the Golgi complex, the 39 kDa form becomes 40 kDa, due to elaboration of the Asn-linked side chain. The ultimate processing step removes a peptide containing the Asn-linked chain. Mature PrB has only non-Asn-linked carbohydrates.

It is found in the vacuole. The catalysed reaction is Hydrolysis of proteins with broad specificity, and of Bz-Arg-OEt &gt; Ac-Tyr-OEt. Does not hydrolyze peptide amides.. Its function is as follows. Vacuolar proteinase B involved in protein degradation in the vacuole. Among other substrates, acts on carboxypeptidase Y (cpY/PRC1) to activate it by processing its Pro-peptide. Required for meiosis and spore formation, and for optimal survival in stationary phase. The protein is Cerevisin (PRB1) of Saccharomyces cerevisiae (strain ATCC 204508 / S288c) (Baker's yeast).